A 335-amino-acid polypeptide reads, in one-letter code: Histidinol-phosphate aminotransferase (335 aa).

K202 carries the post-translational modification N6-(pyridoxal phosphate)lysine.

It belongs to the class-II pyridoxal-phosphate-dependent aminotransferase family. Histidinol-phosphate aminotransferase subfamily. Homodimer. Requires pyridoxal 5'-phosphate as cofactor.

The enzyme catalyses L-histidinol phosphate + 2-oxoglutarate = 3-(imidazol-4-yl)-2-oxopropyl phosphate + L-glutamate. The protein operates within amino-acid biosynthesis; L-histidine biosynthesis; L-histidine from 5-phospho-alpha-D-ribose 1-diphosphate: step 7/9. The protein is Histidinol-phosphate aminotransferase of Thermotoga sp. (strain RQ2).